A 547-amino-acid polypeptide reads, in one-letter code: 2-succinyl-5-enolpyruvyl-6-hydroxy-3-cyclohexene-1-carboxylate synthase (547 aa).

It belongs to the TPP enzyme family. MenD subfamily. In terms of assembly, homodimer. The cofactor is Mg(2+). Mn(2+) serves as cofactor. It depends on thiamine diphosphate as a cofactor.

It catalyses the reaction isochorismate + 2-oxoglutarate + H(+) = 5-enolpyruvoyl-6-hydroxy-2-succinyl-cyclohex-3-ene-1-carboxylate + CO2. Its pathway is quinol/quinone metabolism; 1,4-dihydroxy-2-naphthoate biosynthesis; 1,4-dihydroxy-2-naphthoate from chorismate: step 2/7. It participates in quinol/quinone metabolism; menaquinone biosynthesis. Catalyzes the thiamine diphosphate-dependent decarboxylation of 2-oxoglutarate and the subsequent addition of the resulting succinic semialdehyde-thiamine pyrophosphate anion to isochorismate to yield 2-succinyl-5-enolpyruvyl-6-hydroxy-3-cyclohexene-1-carboxylate (SEPHCHC). In Mycobacterium sp. (strain JLS), this protein is 2-succinyl-5-enolpyruvyl-6-hydroxy-3-cyclohexene-1-carboxylate synthase.